The chain runs to 458 residues: Argininosuccinate lyase (458 aa).

This sequence belongs to the lyase 1 family. Argininosuccinate lyase subfamily.

Its subcellular location is the cytoplasm. It carries out the reaction 2-(N(omega)-L-arginino)succinate = fumarate + L-arginine. The protein operates within amino-acid biosynthesis; L-arginine biosynthesis; L-arginine from L-ornithine and carbamoyl phosphate: step 3/3. This Salmonella heidelberg (strain SL476) protein is Argininosuccinate lyase.